The chain runs to 82 residues: Exodeoxyribonuclease 7 small subunit (82 aa).

It belongs to the XseB family. In terms of assembly, heterooligomer composed of large and small subunits.

The protein localises to the cytoplasm. The catalysed reaction is Exonucleolytic cleavage in either 5'- to 3'- or 3'- to 5'-direction to yield nucleoside 5'-phosphates.. Bidirectionally degrades single-stranded DNA into large acid-insoluble oligonucleotides, which are then degraded further into small acid-soluble oligonucleotides. This is Exodeoxyribonuclease 7 small subunit from Coxiella burnetii (strain CbuG_Q212) (Coxiella burnetii (strain Q212)).